We begin with the raw amino-acid sequence, 882 residues long: MNAPAKFSTSQIRSDFLAFFEGRGHTIVPSAPLVPGNDPTLLFTNSGMVQFKDVFLGAEKRSYVRAADVQRCLRAGGKHNDLDSVGYTARHHTFFEMLGNWSFGDYFKKDAIAWAWELLTQIWKLPTDRLLVTVYHTDEEAFALWRDMIGIPESRIVRIGDNKGAPYASDNFWQMADTGPCGPCTEIFFDHGDHIAGGPPGSPDEDGDRFIEIWNLVFMQFDRQPDGTLVPLPAPCVDTGMGLERLAAILQHVHTNYEIDLFQALIGKASALTGITDLENKSLRVIADHIRACSFLIVDGVLPSNEGRGYVLRRIIRRALRHGWMLGVRQPFFSKMVPTLVELMGEAYPELVVAKDTVARALLAEEERFAETLDAGMKIFDEVASRSQDIIPGADAFRLYDTYGFPVDLTADIARERGMRVDMEGFECAMERQRETARAAGKFGGGVALPADLVASMSPTVFLGYEAYDADALRVVALLKQGRPVERAQAGDEVIVFTDRTPFYAESGGQVGDSGQLNGPGVLIEVADTQKFAGQFHGHVGRISEGTLALGDVLAGGIDVQRRGKTILNHSATHLLHAALREVLGTHVQQKGSLVAPDRLRFDFSHFQPITADELAVIERKVNAEVRTNHGVEVHNMAMQEALDFGAMALFGEKYGENVRVLKMGGYSTELCGGTHVTRTGDIGLFKITSEGGVSSGVRRIEAVTGQGALDYVADEERRLLEAAHLLGGNATEVVDKVRALTERQKRLQRELESLKAKLASGATADLGAAAIDVAGVKVVAVRLEGFDAKALRDAMDRLKQQLGDSVIVLAGASGGKVALVSGVNGSPTGKVKAGELLSNIASQIGGKGGGRPDLAQGGGEDGPALATALDGVPLWVKQHLG.

Positions 570, 574, 672, and 676 each coordinate Zn(2+).

The protein belongs to the class-II aminoacyl-tRNA synthetase family. Zn(2+) is required as a cofactor.

It is found in the cytoplasm. It catalyses the reaction tRNA(Ala) + L-alanine + ATP = L-alanyl-tRNA(Ala) + AMP + diphosphate. Its function is as follows. Catalyzes the attachment of alanine to tRNA(Ala) in a two-step reaction: alanine is first activated by ATP to form Ala-AMP and then transferred to the acceptor end of tRNA(Ala). Also edits incorrectly charged Ser-tRNA(Ala) and Gly-tRNA(Ala) via its editing domain. The sequence is that of Alanine--tRNA ligase from Xanthomonas oryzae pv. oryzae (strain MAFF 311018).